A 305-amino-acid polypeptide reads, in one-letter code: Protoheme IX farnesyltransferase 1 (305 aa).

The next 8 membrane-spanning stretches (helical) occupy residues 22-42 (IKTG…TLAL), 53-73 (IPEI…AGAF), 94-114 (VTGD…TIFG), 115-135 (LVFL…GLFL), 154-174 (IGSV…YPDV), 179-199 (IIGL…AIAI), 230-250 (LVIL…LMLV), and 283-303 (LFHM…GIFF).

The protein belongs to the UbiA prenyltransferase family. Protoheme IX farnesyltransferase subfamily. As to quaternary structure, interacts with CtaA.

It is found in the cell membrane. The enzyme catalyses heme b + (2E,6E)-farnesyl diphosphate + H2O = Fe(II)-heme o + diphosphate. It participates in porphyrin-containing compound metabolism; heme O biosynthesis; heme O from protoheme: step 1/1. Converts heme B (protoheme IX) to heme O by substitution of the vinyl group on carbon 2 of heme B porphyrin ring with a hydroxyethyl farnesyl side group. The chain is Protoheme IX farnesyltransferase 1 from Bacillus cytotoxicus (strain DSM 22905 / CIP 110041 / 391-98 / NVH 391-98).